The primary structure comprises 703 residues: DNA ligase (703 aa).

NAD(+)-binding positions include 54–58 (DAEYD), 103–104 (SL), and E132. K134 functions as the N6-AMP-lysine intermediate in the catalytic mechanism. Residues R155, E192, K308, and K332 each coordinate NAD(+). The Zn(2+) site is built by C426, C429, C444, and C450. The 91-residue stretch at 608–698 (EGPGPLDGVV…ADAARALAVP (91 aa)) folds into the BRCT domain.

This sequence belongs to the NAD-dependent DNA ligase family. LigA subfamily. The cofactor is Mg(2+). Mn(2+) is required as a cofactor.

It catalyses the reaction NAD(+) + (deoxyribonucleotide)n-3'-hydroxyl + 5'-phospho-(deoxyribonucleotide)m = (deoxyribonucleotide)n+m + AMP + beta-nicotinamide D-nucleotide.. DNA ligase that catalyzes the formation of phosphodiester linkages between 5'-phosphoryl and 3'-hydroxyl groups in double-stranded DNA using NAD as a coenzyme and as the energy source for the reaction. It is essential for DNA replication and repair of damaged DNA. The sequence is that of DNA ligase from Parafrankia sp. (strain EAN1pec).